A 579-amino-acid polypeptide reads, in one-letter code: MSTDLLYEYFYPPTDLFKNTFEDVPPSPESLDVGDSLGSSPSYDLGFQPSFDIDFCIWKEGSSSPPPESNHLPEIVNKASTSPRGMPSPLTDSRSCHVCSSPTANTLHFGGRSCKACAAFFRRSVSMSMTYECIGTGDDTNPCRTHYELRMICRHCRFIKCLDAGMRRELVQARKEETRVAKRRSKGLVVSKKEDDDVESSYDEYVNTYTNVQDSSPKMESGINEMTIPESYLSPDPSSSQPLDMTVTPPPLHRSTPSILLTPATGDRMHCQRVLSNSPPFDIHQASTSHAGFIQHVQFYPVVEVENKIFELVDHYVRTEASLNDRRKIMYTDTQIRDVFDTTCECPYENHQLKPFNYKSFCGFVKHDFVMILDYVNQFPEFQALHKNDKNVVYRMACAVDSMLASAYYSYKVGIEKERLILFNGDYINMNPIPISGDEPGAGTEFQTPQEHEKYKTLMPLKLKQYFDLAIPFARLEVSFEEYVLLKALIIWQISNYRLLEEGRAICARQRDTIVQALHKVVEERGDEDPAIRVGQLLLSMSYITEQVQAMTNSYLVMTFFDVVSCDSIMYDLLSFRDD.

The nuclear receptor DNA-binding region spans 93–173 (SRSCHVCSSP…AGMRRELVQA (81 aa)). 2 consecutive NR C4-type zinc fingers follow at residues 96–117 (CHVC…CKAC) and 133–161 (CIGT…FIKC). A compositionally biased stretch (low complexity) spans 233–242 (LSPDPSSSQP). Residues 233–256 (LSPDPSSSQPLDMTVTPPPLHRST) are disordered. One can recognise an NR LBD domain in the interval 304–577 (EVENKIFELV…SIMYDLLSFR (274 aa)).

This sequence belongs to the nuclear hormone receptor family.

The protein resides in the nucleus. Orphan nuclear receptor. This chain is Nuclear hormone receptor family member nhr-22 (nhr-22), found in Caenorhabditis elegans.